The following is a 552-amino-acid chain: Mothers against decapentaplegic homolog 4 (552 aa).

The tract at residues 1–322 (MDNMSITNTP…PISNHPAPEY (322 aa)) is mediates interaction with ZBTB7A. An MH1 domain is found at 18–142 (SIVHSLMCHR…YERVVSPGID (125 aa)). Lys-37 is modified (N6-acetyllysine). The segment at 44 to 69 (VKKLKEKKDELDSLITAITTNGAHPS) is required for interaction with TSC22D1. Cys-71 lines the Zn(2+) pocket. Residue Lys-113 forms a Glycyl lysine isopeptide (Lys-Gly) (interchain with G-Cter in SUMO2) linkage. Residues Cys-115, Cys-127, and His-132 each contribute to the Zn(2+) site. The segment at 264-297 (STTTWTGSRTAPYPPNLPHHQNGHLQHHPPMPPH) is disordered. The SAD stretch occupies residues 275–320 (PYPPNLPHHQNGHLQHHPPMPPHPGHYWPVHNELAFQPPISNHPAP). The MH2 domain maps to 323–552 (WCSIAYFEMD…MPIADPQPLD (230 aa)). An N6-acetyllysine mark is found at Lys-428 and Lys-507. Residue Lys-519 forms a Glycyl lysine isopeptide (Lys-Gly) (interchain with G-Cter in ubiquitin) linkage.

The protein belongs to the dwarfin/SMAD family. As to quaternary structure, monomer; in the absence of TGF-beta activation. Heterotrimer; on TGF-beta activation. Heterotrimer composed of two molecules of a C-terminally phosphorylated R-SMAD molecule, SMAD2 or SMAD3, and one molecule of SMAD4 to form the transcriptional active SMAD2/SMAD3-SMAD4 complex. Found in a ternary complex composed of SMAD4, STK11/LKB1 and STK11IP. Found in a complex with SMAD1 and YY1. Identified in a complex that contains at least ZNF451, SMAD2, SMAD3 and SMAD4. Interacts with ATF2, COPS5, DACH1, MSG1, SKI, STK11/LKB1, STK11IP and TRIM33. Associates with ZNF423 or ZNF521 in response to BMP2 leading to activate transcription of BMP target genes. Interacts with USP9X. Interacts with RBPMS. Interacts with WWTR1 (via coiled-coil domain). Interacts with CITED1 and CITED2. Interacts with PDPK1 (via PH domain). Interacts with VPS39; this interaction affects heterodimer formation with SMAD3, but not with SMAD2, and leads to inhibition of SMAD3-dependent transcription activation. Interactions with VPS39 and SMAD2 may be mutually exclusive. Interacts (via MH2 domain) with ZNF451 (via N-terminal zinc-finger domains). Interacts with ZC3H3. Interacts weakly with ZNF8. Interacts with NUP93 and IPO7; translocates SMAD4 to the nucleus through the NPC upon BMP7 stimulation resulting in activation of SMAD4 signaling. Interacts with CREB3L1, the interaction takes place upon TGFB1 induction and SMAD4 acts as a CREB3L1 coactivator to induce the expression of genes involved in the assembly of collagen extracellular matrix. Interacts with DLX1. Interacts with ZBTB7A; the interaction is direct and stimulated by TGFB1. Interacts with CREBBP; the recruitment of this transcriptional coactivator is negatively regulated by ZBTB7A. Interacts with EP300; the interaction with this transcriptional coactivator is negatively regulated by ZBTB7A. Interacts with HDAC1. Interacts (via MH2 domain) with ZMIZ1 (via SP-RING-type domain); in the TGF-beta signaling pathway increases the activity of the SMAD3/SMAD4 transcriptional complex. Interacts (via N-terminus) with TSC22D1. Phosphorylated by PDPK1. In terms of processing, monoubiquitinated on Lys-519 by E3 ubiquitin-protein ligase TRIM33. Monoubiquitination hampers its ability to form a stable complex with activated SMAD2/3 resulting in inhibition of TGF-beta/BMP signaling cascade. Deubiquitination by USP9X restores its competence to mediate TGF-beta signaling.

It localises to the cytoplasm. It is found in the nucleus. Functionally, common SMAD (co-SMAD) is the coactivator and mediator of signal transduction by TGF-beta (transforming growth factor). Component of the heterotrimeric SMAD2/SMAD3-SMAD4 complex that forms in the nucleus and is required for the TGF-mediated signaling. Promotes binding of the SMAD2/SMAD4/FAST-1 complex to DNA and provides an activation function required for SMAD1 or SMAD2 to stimulate transcription. Component of the multimeric SMAD3/SMAD4/JUN/FOS complex which forms at the AP1 promoter site; required for synergistic transcriptional activity in response to TGF-beta. Acts synergistically with SMAD1 and YY1 in bone morphogenetic protein (BMP)-mediated cardiac-specific gene expression. Binds to SMAD binding elements (SBEs) (5'-GTCT/AGAC-3') within BMP response element (BMPRE) of cardiac activating regions. May act as a tumor suppressor. Positively regulates PDPK1 kinase activity by stimulating its dissociation from the 14-3-3 protein YWHAQ which acts as a negative regulator. In muscle physiology, plays a central role in the balance between atrophy and hypertrophy. When recruited by MSTN, promotes atrophy response via phosphorylated SMAD2/4. MSTN decrease causes SMAD4 release and subsequent recruitment by the BMP pathway to promote hypertrophy via phosphorylated SMAD1/5/8. The sequence is that of Mothers against decapentaplegic homolog 4 (SMAD4) from Sus scrofa (Pig).